Reading from the N-terminus, the 457-residue chain is Acetylcholine receptor subunit alpha (457 aa).

An N-terminal signal peptide occupies residues 1 to 20 (MELTAVLLLLGLCSAGTVLG). Over 21–230 (SEHETRLVAK…ITYHFVMQRL (210 aa)) the chain is Extracellular. Cystine bridges form between C148/C162 and C212/C213. N-linked (GlcNAc...) asparagine glycosylation is present at N161. 3 helical membrane passes run 231–255 (PLYF…VFYL), 263–281 (MTLS…LVIV), and 297–316 (YMLF…VIVI). The Cytoplasmic segment spans residues 317-428 (NTHHRSPSTH…WKYVAMVMDH (112 aa)). A helical transmembrane segment spans residues 429 to 447 (ILLGVFMLVCLIGTLAVFA).

It belongs to the ligand-gated ion channel (TC 1.A.9) family. Acetylcholine receptor (TC 1.A.9.1) subfamily. Alpha-1/CHRNA1 sub-subfamily. As to quaternary structure, one of the alpha chains that assemble within the acetylcholine receptor, a pentamer of two alpha chains, a beta, a delta, and a gamma (in immature muscle) or epsilon (in mature muscle) chains. The muscle heteropentamer composed of alpha-1, beta-1, delta, epsilon subunits interacts with the alpha-conotoxin ImII.

It is found in the postsynaptic cell membrane. It localises to the cell membrane. It catalyses the reaction K(+)(in) = K(+)(out). The enzyme catalyses Na(+)(in) = Na(+)(out). Upon acetylcholine binding, the AChR responds by an extensive change in conformation that affects all subunits and leads to opening of an ion-conducting channel across the plasma membrane. This Rattus norvegicus (Rat) protein is Acetylcholine receptor subunit alpha (Chrna1).